Here is a 435-residue protein sequence, read N- to C-terminus: Phosphomethylpyrimidine synthase (435 aa).

Substrate contacts are provided by residues N67, M96, Y125, H163, 185–187 (SRG), 226–229 (DGLR), and E265. H269 contacts Zn(2+). Y292 is a binding site for substrate. H333 is a Zn(2+) binding site. [4Fe-4S] cluster contacts are provided by C408, C411, and C415.

It belongs to the ThiC family. [4Fe-4S] cluster serves as cofactor.

It catalyses the reaction 5-amino-1-(5-phospho-beta-D-ribosyl)imidazole + S-adenosyl-L-methionine = 4-amino-2-methyl-5-(phosphooxymethyl)pyrimidine + CO + 5'-deoxyadenosine + formate + L-methionine + 3 H(+). The protein operates within cofactor biosynthesis; thiamine diphosphate biosynthesis. Functionally, catalyzes the synthesis of the hydroxymethylpyrimidine phosphate (HMP-P) moiety of thiamine from aminoimidazole ribotide (AIR) in a radical S-adenosyl-L-methionine (SAM)-dependent reaction. This chain is Phosphomethylpyrimidine synthase, found in Thermus thermophilus (strain ATCC 27634 / DSM 579 / HB8).